Consider the following 636-residue polypeptide: uncharacterized protein (636 aa).

2 disordered regions span residues 1 to 22 (MYNV…NEIG) and 81 to 107 (SSQT…PQNN). Residues 1-170 (MYNVRGDLNR…YFVGGEGLMQ (170 aa)) lie on the Cytoplasmic side of the membrane. A helical; Signal-anchor for type II membrane protein membrane pass occupies residues 171–191 (LLFLLFLAAGTGMLFIGLPIL). Residues 192-636 (TYTGHNSLAS…RPKNSLMDGC (445 aa)) are Lumenal-facing. Residues 218-587 (LRYGSLIDPD…YVRIYQDSSD (370 aa)) form the GH16 domain. N-linked (GlcNAc...) asparagine glycosylation is found at N291, N378, N429, N464, N489, and N616.

Belongs to the SKN1/KRE6 family.

Its subcellular location is the endoplasmic reticulum membrane. In terms of biological role, required for synthesis of the major beta-glucans of the yeast cell wall. This is an uncharacterized protein from Schizosaccharomyces pombe (strain 972 / ATCC 24843) (Fission yeast).